The primary structure comprises 325 residues: Elongation factor P--(R)-beta-lysine ligase (325 aa).

76-78 (SPE) contacts substrate. ATP-binding positions include 100-102 (RNE) and N109. Y118 is a binding site for substrate. Residue 244 to 245 (EL) coordinates ATP. E251 is a binding site for substrate. G300 serves as a coordination point for ATP.

This sequence belongs to the class-II aminoacyl-tRNA synthetase family. EpmA subfamily. As to quaternary structure, homodimer.

The catalysed reaction is D-beta-lysine + L-lysyl-[protein] + ATP = N(6)-((3R)-3,6-diaminohexanoyl)-L-lysyl-[protein] + AMP + diphosphate + H(+). With EpmB is involved in the beta-lysylation step of the post-translational modification of translation elongation factor P (EF-P). Catalyzes the ATP-dependent activation of (R)-beta-lysine produced by EpmB, forming a lysyl-adenylate, from which the beta-lysyl moiety is then transferred to the epsilon-amino group of a conserved specific lysine residue in EF-P. The chain is Elongation factor P--(R)-beta-lysine ligase from Photorhabdus laumondii subsp. laumondii (strain DSM 15139 / CIP 105565 / TT01) (Photorhabdus luminescens subsp. laumondii).